The chain runs to 334 residues: Phenylalanine--tRNA ligase alpha subunit (334 aa).

Glutamate 249 provides a ligand contact to Mg(2+).

This sequence belongs to the class-II aminoacyl-tRNA synthetase family. Phe-tRNA synthetase alpha subunit type 1 subfamily. Tetramer of two alpha and two beta subunits. Mg(2+) is required as a cofactor.

It localises to the cytoplasm. It carries out the reaction tRNA(Phe) + L-phenylalanine + ATP = L-phenylalanyl-tRNA(Phe) + AMP + diphosphate + H(+). This is Phenylalanine--tRNA ligase alpha subunit from Desulfosudis oleivorans (strain DSM 6200 / JCM 39069 / Hxd3) (Desulfococcus oleovorans).